The chain runs to 411 residues: Intracellular hyaluronan-binding protein 4 (411 aa).

2 positions are modified to phosphoserine: serine 7 and serine 36. Residues 42 to 62 are a coiled coil; it reads LREAEHRRQQQLQRKRRDEAA. Residues 42 to 271 are disordered; sequence LREAEHRRQQ…ECQGTLDEES (230 aa). The residue at position 70 (arginine 70) is an Omega-N-methylarginine. Serine 74 bears the Phosphoserine mark. Over residues 87-97 the composition is skewed to basic and acidic residues; it reads GRRESQKERKS. Serine 108 carries the post-translational modification Phosphoserine. 2 stretches are compositionally biased toward basic and acidic residues: residues 138 to 181 and 205 to 229; these read VLER…DRPL and DSFDQRGKRDFERYSSNDKTNRMED. Residues lysine 212 and lysine 274 each participate in a glycyl lysine isopeptide (Lys-Gly) (interchain with G-Cter in SUMO1); alternate cross-link. Glycyl lysine isopeptide (Lys-Gly) (interchain with G-Cter in SUMO2); alternate cross-links involve residues lysine 212 and lysine 274. A coiled-coil region spans residues 279 to 301; it reads EVEEENQVQEMTLDEWKNLQEQT. Residues 296-313 show a composition bias toward basic and acidic residues; the sequence is NLQEQTRPKPEFNIRKPE. A disordered region spans residues 296 to 318; sequence NLQEQTRPKPEFNIRKPESTVPS. Lysine 334 participates in a covalent cross-link: Glycyl lysine isopeptide (Lys-Gly) (interchain with G-Cter in SUMO1); alternate. A Glycyl lysine isopeptide (Lys-Gly) (interchain with G-Cter in SUMO2); alternate cross-link involves residue lysine 334. Residues threonine 352 and threonine 373 each carry the phosphothreonine; by PKC modification. A disordered region spans residues 358-411; the sequence is NFGNLPRPGRGARGSTRGGRGRMRRTENYGPRAEVVTQDVAPNPDDPEDFPALA. Positions 402–411 are enriched in acidic residues; that stretch reads DDPEDFPALA.

It belongs to the SERBP1-HABP4 family. In terms of assembly, associates with ribosomes; promoting ribosome stabilization. Interacts with EEF2/eEF2; promoting ribosome stabilization. Interacts with FMR1. Interacts with FXR1 and FXR2. Interacts with CHD3 (via C-terminus). Interacts (via C-terminus) with RACK1. Interacts with p53/TP53. Interacts (via N-terminus) with SRSF9; this interaction is direct. Interacts with SYNCRIP; this interaction is direct. Interacts with MEF2C (via N-terminus); this interaction decreases DNA-binding activity of MEF2C in myocardial cells in response to mechanical stress. Interacts with PRMT1 (via N-terminus). Interacts with SPIN1. In terms of processing, phosphorylated by phorbol 12-myristate 13-acetate (PMA)-activated PKC isoforms at Thr-352 and Thr-373. Post-translationally, methylated. Methylation is decreased by phorbol 12-myristate 13-acetate (PMA)-activated PKC, in vitro. In terms of tissue distribution, expressed in adult heart, brain, liver, kidney, testis, and in various embryonic tissues, but not in adult spleen, lung or skeletal muscle.

It is found in the nucleus. Its subcellular location is the cytoplasm. It localises to the stress granule. The protein localises to the sarcoplasm. The protein resides in the nuclear body. It is found in the nucleolus. Its subcellular location is the nucleus speckle. It localises to the cajal body. The protein localises to the gem. Ribosome-binding protein that promotes ribosome hibernation, a process during which ribosomes are stabilized in an inactive state and preserved from proteasomal degradation. Acts via its association with EEF2/eEF2 factor at the A-site of the ribosome, promoting ribosome stabilization in an inactive state compatible with storage. Plays a key role in ribosome hibernation in the mature oocyte by promoting ribosome stabilization. Ribosomes, which are produced in large quantities during oogenesis, are stored and translationally repressed in the oocyte and early embryo. Also binds RNA, regulating transcription and pre-mRNA splicing. Binds (via C-terminus) to poly(U) RNA. Seems to play a role in PML-nuclear bodies formation. Negatively regulates DNA-binding activity of the transcription factor MEF2C in myocardial cells in response to mechanical stress. This chain is Intracellular hyaluronan-binding protein 4, found in Mus musculus (Mouse).